We begin with the raw amino-acid sequence, 199 residues long: Potassium-transporting ATPase KdpC subunit 2 (199 aa).

A helical membrane pass occupies residues 13–33 (ITLIFWLVTAIIYPLAILVVG).

This sequence belongs to the KdpC family. The system is composed of three essential subunits: KdpA, KdpB and KdpC.

Its subcellular location is the cell inner membrane. Functionally, part of the high-affinity ATP-driven potassium transport (or Kdp) system, which catalyzes the hydrolysis of ATP coupled with the electrogenic transport of potassium into the cytoplasm. This subunit acts as a catalytic chaperone that increases the ATP-binding affinity of the ATP-hydrolyzing subunit KdpB by the formation of a transient KdpB/KdpC/ATP ternary complex. This chain is Potassium-transporting ATPase KdpC subunit 2, found in Nostoc sp. (strain PCC 7120 / SAG 25.82 / UTEX 2576).